Consider the following 782-residue polypeptide: Cleavage and polyadenylation specificity factor subunit 2 (782 aa).

Over residues 407–416 (KKLEQSKEAD) the composition is skewed to basic and acidic residues. Positions 407 to 449 (KKLEQSKEADIDSSDESDIEEDIDQPSAHKTKHDLMMKGEGSR) are disordered. Residues 417–430 (IDSSDESDIEEDID) are compositionally biased toward acidic residues. Phosphoserine occurs at positions 419, 420, and 423. A compositionally biased stretch (basic and acidic residues) spans 439-449 (HDLMMKGEGSR). Position 660 is a phosphoserine (serine 660).

It belongs to the metallo-beta-lactamase superfamily. RNA-metabolizing metallo-beta-lactamase-like family. CPSF2/YSH1 subfamily. As to quaternary structure, component of the cleavage and polyadenylation specificity factor (CPSF) complex, composed of CPSF1, CPSF2, CPSF3, CPSF4 and FIP1L1. Interacts with CPSF3, CSTF2 and SYMPK. Interacts with ZC3H3.

The protein localises to the nucleus. Component of the cleavage and polyadenylation specificity factor (CPSF) complex that play a key role in pre-mRNA 3'-end formation, recognizing the AAUAAA signal sequence and interacting with poly(A) polymerase and other factors to bring about cleavage and poly(A) addition. Involved in the histone 3' end pre-mRNA processing. The protein is Cleavage and polyadenylation specificity factor subunit 2 (CPSF2) of Homo sapiens (Human).